Reading from the N-terminus, the 322-residue chain is Aspartate--ammonia ligase (322 aa).

This sequence belongs to the class-II aminoacyl-tRNA synthetase family. AsnA subfamily.

It is found in the cytoplasm. The enzyme catalyses L-aspartate + NH4(+) + ATP = L-asparagine + AMP + diphosphate + H(+). It participates in amino-acid biosynthesis; L-asparagine biosynthesis; L-asparagine from L-aspartate (ammonia route): step 1/1. The chain is Aspartate--ammonia ligase from Lactiplantibacillus plantarum (strain ATCC BAA-793 / NCIMB 8826 / WCFS1) (Lactobacillus plantarum).